The primary structure comprises 204 residues: Large ribosomal subunit protein eL15 (204 aa).

The protein belongs to the eukaryotic ribosomal protein eL15 family. Component of the large ribosomal subunit.

It localises to the cytoplasm. Its function is as follows. Component of the large ribosomal subunit. The ribosome is a large ribonucleoprotein complex responsible for the synthesis of proteins in the cell. The protein is Large ribosomal subunit protein eL15 (rpl15) of Megalobrama amblycephala (Chinese blunt snout bream).